The following is a 367-amino-acid chain: CST complex subunit STN1 (367 aa).

The OB DNA-binding region spans 56–154; that stretch reads VEILGTVIGR…EIRVTTYYKV (99 aa). 2 winged helix-turn-helix (wHTH) regions span residues 190-294 and 295-367; these read RAFS…YVTR and EDKE…YTAF.

Belongs to the STN1 family. Component of the CST complex, composed of TEN1, CTC1 and STN1. Interacts with TEN1 and CTC1; the interaction is direct. Interacts with ACD/TPP1.

It is found in the nucleus. The protein resides in the chromosome. Its subcellular location is the telomere. In terms of biological role, component of the CST complex, a complex that binds to single-stranded DNA and is required to protect telomeres from DNA degradation. The CST complex binds single-stranded DNA with high affinity in a sequence-independent manner, while isolated subunits bind DNA with low affinity by themselves. In addition to telomere protection, the CST complex has probably a more general role in DNA metabolism at non-telomeric sites. This Ailuropoda melanoleuca (Giant panda) protein is CST complex subunit STN1.